The sequence spans 254 residues: 5'-nucleotidase SurE (254 aa).

A divalent metal cation-binding residues include aspartate 8, aspartate 9, serine 39, and asparagine 97.

Belongs to the SurE nucleotidase family. A divalent metal cation serves as cofactor.

It is found in the cytoplasm. The catalysed reaction is a ribonucleoside 5'-phosphate + H2O = a ribonucleoside + phosphate. Functionally, nucleotidase that shows phosphatase activity on nucleoside 5'-monophosphates. This Alkaliphilus metalliredigens (strain QYMF) protein is 5'-nucleotidase SurE.